Consider the following 235-residue polypeptide: 5'-methylthioadenosine/S-adenosylhomocysteine nucleosidase (235 aa).

The Proton acceptor role is filled by Glu12. Residues Gly78, Ile152, and 173–174 (ME) contribute to the substrate site. Residue Asp197 is the Proton donor of the active site.

This sequence belongs to the PNP/UDP phosphorylase family. MtnN subfamily. As to quaternary structure, homodimer.

It carries out the reaction S-adenosyl-L-homocysteine + H2O = S-(5-deoxy-D-ribos-5-yl)-L-homocysteine + adenine. It catalyses the reaction S-methyl-5'-thioadenosine + H2O = 5-(methylsulfanyl)-D-ribose + adenine. The enzyme catalyses 5'-deoxyadenosine + H2O = 5-deoxy-D-ribose + adenine. It participates in amino-acid biosynthesis; L-methionine biosynthesis via salvage pathway; S-methyl-5-thio-alpha-D-ribose 1-phosphate from S-methyl-5'-thioadenosine (hydrolase route): step 1/2. In terms of biological role, catalyzes the irreversible cleavage of the glycosidic bond in both 5'-methylthioadenosine (MTA) and S-adenosylhomocysteine (SAH/AdoHcy) to adenine and the corresponding thioribose, 5'-methylthioribose and S-ribosylhomocysteine, respectively. Also cleaves 5'-deoxyadenosine, a toxic by-product of radical S-adenosylmethionine (SAM) enzymes, into 5-deoxyribose and adenine. Thus, is required for in vivo function of the radical SAM enzymes biotin synthase and lipoic acid synthase, that are inhibited by 5'-deoxyadenosine accumulation. The sequence is that of 5'-methylthioadenosine/S-adenosylhomocysteine nucleosidase from Buchnera aphidicola subsp. Schizaphis graminum (strain Sg).